A 409-amino-acid chain; its full sequence is NADH-quinone oxidoreductase subunit D (409 aa).

This sequence belongs to the complex I 49 kDa subunit family. In terms of assembly, NDH-1 is composed of 14 different subunits. Subunits NuoB, C, D, E, F, and G constitute the peripheral sector of the complex.

It localises to the cell inner membrane. The enzyme catalyses a quinone + NADH + 5 H(+)(in) = a quinol + NAD(+) + 4 H(+)(out). Functionally, NDH-1 shuttles electrons from NADH, via FMN and iron-sulfur (Fe-S) centers, to quinones in the respiratory chain. The immediate electron acceptor for the enzyme in this species is believed to be ubiquinone. Couples the redox reaction to proton translocation (for every two electrons transferred, four hydrogen ions are translocated across the cytoplasmic membrane), and thus conserves the redox energy in a proton gradient. The chain is NADH-quinone oxidoreductase subunit D from Helicobacter hepaticus (strain ATCC 51449 / 3B1).